A 606-amino-acid polypeptide reads, in one-letter code: MAIINLPVPTNSSSEVNKHNHLRSCLPSGRATFTTLSAAAMRSATMAAANVREQSGQKQQLINRRSGNYEAPLWEFDYIQSLKNEYAGDIYVSRANELKEQVKMMLDEEDMKLLDCMELVDGLERLGLAYHFEGRINRLLSSDYKAIHEGNHQRNKEDLYAAALEFRIFRQNGFNVPQDIFNDFITEDGEFDESLSEDTMGLLSLYEASFLSLEGEATLDLAREFTTKHLNNYLGKENTDQNLRILVYHALELPLRWRAPRIEARWYIDAYERSPNVNPTLLELAKIDFNIVQAIHQQDLKHVSWWWKNIRIAEKLTFIRDRIVENFFWAIGAVFEPQYGSCRRMLTKVFALITMIDDIYDVYGTLEELELFTDAVDRWDVKAIDQLPDYMRVGYLGFFNSINEMAYDALKEQGVHIVEYLRKVWADLCKAYLQEAKWYYAGYTPTVEEYLENAWVSMSVPVMLMHAYAGVTNPMNKEAMDVLDTHDIVRCSSYLLRFADDLGTSPGEMKRGDVPKLVQCYMKEAGCSEEESREHVWFLLRETWKKMNKDSEWAESPFSKTFVTAAKNFGRVALVMYQYGDGHGLHSNPEAKDRILASLFSPVPPA.

The N-terminal 38 residues, 1-38 (MAIINLPVPTNSSSEVNKHNHLRSCLPSGRATFTTLSA), are a transit peptide targeting the chloroplast. Arginine 320, aspartate 357, aspartate 361, arginine 497, and aspartate 500 together coordinate (2E)-geranyl diphosphate. The Mg(2+) site is built by aspartate 357 and aspartate 361. The DDXXD motif motif lies at 357 to 361 (DDIYD). 3 residues coordinate Mg(2+): aspartate 500, threonine 504, and glutamate 508.

Belongs to the terpene synthase family. Tpsb subfamily. In terms of assembly, monomer. Mg(2+) is required as a cofactor. The cofactor is Mn(2+). Confined to fruits.

It localises to the plastid. The protein resides in the chloroplast. The catalysed reaction is (2E,6E)-farnesyl diphosphate = (E)-beta-farnesene + diphosphate. It carries out the reaction (2E)-geranyl diphosphate = limonene + diphosphate. It catalyses the reaction (2E)-geranyl diphosphate = beta-pinene + diphosphate. The enzyme catalyses (2E)-geranyl diphosphate = sabinene + diphosphate. The catalysed reaction is (2E)-geranyl diphosphate = beta-myrcene + diphosphate. It carries out the reaction (2E)-geranyl diphosphate = alpha-pinene + diphosphate. It catalyses the reaction (2E)-geranyl diphosphate = terpinolene + diphosphate. It functions in the pathway secondary metabolite biosynthesis; terpenoid biosynthesis. Monoterpene synthase (mono-TPS) involved in the biosynthesis of monoterpenes natural products, constituent of coffee beverage aroma. Catalyzes the conversion of (2E)-geranyl diphosphate (GPP) into limonene, beta-pinene, sabinene and beta-myrcene, and, as minor products, alpha-pinene and alpha-terpinolene. Can also, with a low efficiency, use farnesyl pyrophosphate (FPP) as substrate to produce beta-farnesene. Not able to use geranylgeranyl pyrophosphate (GGPP) as substrate. This is Limonene synthase, chloroplastic from Coffea arabica (Arabian coffee).